A 611-amino-acid polypeptide reads, in one-letter code: Adenosylhomocysteinase 3 (611 aa).

3 stretches are compositionally biased toward low complexity: residues 1–14, 40–57, and 68–78; these read MSVQ…AAKV, AMAP…APAA, and GPAAALSPAAG. The interval 1–184 is disordered; it reads MSVQVVSAAA…KQQKNSKGNS (184 aa). Residue S2 is modified to N-acetylserine. Positions 2 to 109 are LISN domain, inhibits interaction with ITPR1; sequence SVQVVSAAAA…DGGEALVSPD (108 aa). S107 bears the Phosphoserine mark. Positions 135 to 144 are enriched in basic residues; the sequence is RPTKIGRRSL. Positions 145–164 are enriched in low complexity; that stretch reads SRSISQSSTDSYSSAASYTD. Phosphoserine is present on residues S149, S152, S155, and S158. Substrate is bound by residues T236, D310, and E335. NAD(+) is bound at residue 336-338; it reads SVT. Residues K365 and D369 each contribute to the substrate site. Residues N370, 401–406, E422, N457, 478–479, and N525 contribute to the NAD(+) site; these read GEVGKG and MG.

It belongs to the adenosylhomocysteinase family. Homotetramer. Forms heteromultimers with AHCYL1 (via the C-terminal region). Interacts with ITPR1; with lower affinity than AHCYL1 and maybe via ITPR1. Interacts with SLC4A4. Interacts with ZCCHC4. NAD(+) serves as cofactor. Phosphorylated during neuronal differentiation at the LISN domain. Expressed in parotid and acinar cells (at protein level).

Its subcellular location is the cytoplasm. The protein resides in the microsome. It carries out the reaction S-adenosyl-L-homocysteine + H2O = L-homocysteine + adenosine. It functions in the pathway amino-acid biosynthesis; L-homocysteine biosynthesis; L-homocysteine from S-adenosyl-L-homocysteine: step 1/1. Its function is as follows. May regulate the electrogenic sodium/bicarbonate cotransporter SLC4A4 activity and Mg(2+)-sensitivity. On the contrary of its homolog AHCYL1, does not regulate ITPR1 sensitivity to inositol 1,4,5-trisphosphate. The sequence is that of Adenosylhomocysteinase 3 from Bos taurus (Bovine).